The following is a 220-amino-acid chain: Deoxyribose-phosphate aldolase (220 aa).

Asp89 acts as the Proton donor/acceptor in catalysis. The Schiff-base intermediate with acetaldehyde role is filled by Lys152. The active-site Proton donor/acceptor is the Lys181.

It belongs to the DeoC/FbaB aldolase family. DeoC type 1 subfamily.

It is found in the cytoplasm. The catalysed reaction is 2-deoxy-D-ribose 5-phosphate = D-glyceraldehyde 3-phosphate + acetaldehyde. It functions in the pathway carbohydrate degradation; 2-deoxy-D-ribose 1-phosphate degradation; D-glyceraldehyde 3-phosphate and acetaldehyde from 2-deoxy-alpha-D-ribose 1-phosphate: step 2/2. In terms of biological role, catalyzes a reversible aldol reaction between acetaldehyde and D-glyceraldehyde 3-phosphate to generate 2-deoxy-D-ribose 5-phosphate. The chain is Deoxyribose-phosphate aldolase from Enterococcus faecalis (strain ATCC 700802 / V583).